The following is a 201-amino-acid chain: Cytochrome c oxidase assembly protein CtaG (201 aa).

The Cytoplasmic portion of the chain corresponds to 1 to 13 (MTDQGENEKKQRR). A helical; Signal-anchor for type II membrane protein transmembrane segment spans residues 14–36 (SNATIAVACLSFFVCMIGAAYAS). Residues 37 to 201 (VPLYRIFCQV…KAVGSTRNGG (165 aa)) lie on the Periplasmic side of the membrane.

The protein belongs to the COX11/CtaG family.

Its subcellular location is the cell inner membrane. Functionally, exerts its effect at some terminal stage of cytochrome c oxidase synthesis, probably by being involved in the insertion of the copper B into subunit I. The protein is Cytochrome c oxidase assembly protein CtaG of Brucella suis (strain ATCC 23445 / NCTC 10510).